A 349-amino-acid polypeptide reads, in one-letter code: Protein-glutamate methylesterase/protein-glutamine glutaminase (349 aa).

In terms of domain architecture, Response regulatory spans 5 to 122 (RVLSVDDSAL…REGMLAYSEM (118 aa)). Residue Asp56 is modified to 4-aspartylphosphate. One can recognise a CheB-type methylesterase domain in the interval 152–344 (LLSSEKLIAI…QQMLAKISAG (193 aa)). Active-site residues include Ser164, His190, and Asp286.

Belongs to the CheB family. In terms of processing, phosphorylated by CheA. Phosphorylation of the N-terminal regulatory domain activates the methylesterase activity.

It localises to the cytoplasm. The enzyme catalyses [protein]-L-glutamate 5-O-methyl ester + H2O = L-glutamyl-[protein] + methanol + H(+). It carries out the reaction L-glutaminyl-[protein] + H2O = L-glutamyl-[protein] + NH4(+). Its function is as follows. Involved in chemotaxis. Part of a chemotaxis signal transduction system that modulates chemotaxis in response to various stimuli. Catalyzes the demethylation of specific methylglutamate residues introduced into the chemoreceptors (methyl-accepting chemotaxis proteins or MCP) by CheR. Also mediates the irreversible deamidation of specific glutamine residues to glutamic acid. This Escherichia coli O6:H1 (strain CFT073 / ATCC 700928 / UPEC) protein is Protein-glutamate methylesterase/protein-glutamine glutaminase.